The sequence spans 407 residues: Dual-specificity RNA methyltransferase RlmN (407 aa).

E136 (proton acceptor) is an active-site residue. Residues 144–378 (REDRGAVCIS…MDAGFASPIR (235 aa)) enclose the Radical SAM core domain. A disulfide bridge links C151 with C389. [4Fe-4S] cluster-binding residues include C158, C162, and C165. Residues 215-216 (GE), S247, 269-271 (SLH), and N346 contribute to the S-adenosyl-L-methionine site. C389 serves as the catalytic S-methylcysteine intermediate.

This sequence belongs to the radical SAM superfamily. RlmN family. The cofactor is [4Fe-4S] cluster.

The protein resides in the cytoplasm. It carries out the reaction adenosine(2503) in 23S rRNA + 2 reduced [2Fe-2S]-[ferredoxin] + 2 S-adenosyl-L-methionine = 2-methyladenosine(2503) in 23S rRNA + 5'-deoxyadenosine + L-methionine + 2 oxidized [2Fe-2S]-[ferredoxin] + S-adenosyl-L-homocysteine. The enzyme catalyses adenosine(37) in tRNA + 2 reduced [2Fe-2S]-[ferredoxin] + 2 S-adenosyl-L-methionine = 2-methyladenosine(37) in tRNA + 5'-deoxyadenosine + L-methionine + 2 oxidized [2Fe-2S]-[ferredoxin] + S-adenosyl-L-homocysteine. In terms of biological role, specifically methylates position 2 of adenine 2503 in 23S rRNA and position 2 of adenine 37 in tRNAs. m2A2503 modification seems to play a crucial role in the proofreading step occurring at the peptidyl transferase center and thus would serve to optimize ribosomal fidelity. In Gluconobacter oxydans (strain 621H) (Gluconobacter suboxydans), this protein is Dual-specificity RNA methyltransferase RlmN.